Consider the following 529-residue polypeptide: G-protein coupled receptor 161 (529 aa).

Topologically, residues 1–30 are extracellular; it reads MSLNSSLSCRKELSNLTEEEGGEGGVIITQ. 2 N-linked (GlcNAc...) asparagine glycosylation sites follow: N4 and N15. The chain crosses the membrane as a helical span at residues 31-51; the sequence is FIAIIVITIFVCLGNLVIVVT. Residues 52–64 are Cytoplasmic-facing; that stretch reads LYKKSYLLTLSNK. Residues 65–85 traverse the membrane as a helical segment; the sequence is FVFSLTLSNFLLSVLVLPFVV. Residues 86–101 lie on the Extracellular side of the membrane; that stretch reads TSSIRREWIFGVVWCN. A disulfide bridge connects residues C100 and C178. The chain crosses the membrane as a helical span at residues 102-123; the sequence is FSALLYLLISSASMLTLGVIAI. Residues 124–143 lie on the Cytoplasmic side of the membrane; that stretch reads DRYYAVLYPMVYPMKITGNR. The helical transmembrane segment at 144–164 threads the bilayer; it reads AVMALVYIWLHSLIGCLPPLF. Topologically, residues 165–190 are extracellular; the sequence is GWSSVEFDEFKWMCVAAWHREPGYTA. Residues 191 to 211 traverse the membrane as a helical segment; the sequence is FWQIWCALFPFLVMLVCYGFI. Over 212-269 the chain is Cytoplasmic; it reads FRVARVKARKVHCGTVVIVEEDAQRTGRKNSSTSTSSSGSRRNAFQGVVYSANQCKAL. Residues 270-290 form a helical membrane-spanning segment; it reads ITILVVLGAFMVTWGPYMVVI. Over 291-306 the chain is Extracellular; it reads ASEALWGKSSVSPSLE. The chain crosses the membrane as a helical span at residues 307–327; sequence TWATWLSFASAVCHPLIYGLW. The Cytoplasmic portion of the chain corresponds to 328-529; that stretch reads NKTVRKELLG…EGDVLAAEQR (202 aa).

It belongs to the G-protein coupled receptor 1 family.

The protein resides in the cell projection. It is found in the cilium membrane. The protein localises to the cell membrane. Key negative regulator of Shh signaling, which promotes the processing of GLI3 into GLI3R during neural tube development. Recruited by TULP3 and the IFT-A complex to primary cilia and acts as a regulator of the PKA-dependent basal repression machinery in Shh signaling by increasing cAMP levels, leading to promote the PKA-dependent processing of GLI3 into GLI3R and repress the Shh signaling. In presence of SHH, it is removed from primary cilia and is internalized into recycling endosomes, preventing its activity and allowing activation of the Shh signaling. Its ligand is unknown. This is G-protein coupled receptor 161 (GPR161) from Homo sapiens (Human).